A 1359-amino-acid chain; its full sequence is MYSVEDLLISHGYKLSRDPPASREDNPKGRQAARTGTRAGQGLQNGHEDGPAALAHRKTSAGKGHVSDSESRRSTPRGHGEPQSTSASRTSEAGFCNQPPSAWSSHPPTGNDQAYRRRGRQEARSQKPREHENLEARGMAQAHSLPVHVREGPWEVGGRSEHVMKKPVWEEELRMSGPAKWQNVSLESWNQPRKLGRQMSDGDGERLFQDLYPFIQGEHVLNSQNKGKSRSLPRVLSPESLSCTEIPIPLNERHSPKMPPYPPTCAPNLDSTRNSEKSGCSAPFPRPKFGRPLKPPSYSSHQQSRGGADSSDSQDSQQMDAYVPRHELCLSDPGLEPPVYVPPPSYRSPPQNIPNPYLEDTVPINVCGGHSQQQSPTEKAGASGQPPSGPPGTGNEYGVSPRLPQGLPAHPRPVTAYDGFVQYIPFDDPRLRHFKLAQPQGFCEDIKLDDKSYNSSPVTAQEPAHGGMQPDGAIWNPQSLIPPSGDERGLVLADSSPRWLWGQPPGDGENSGLPNQRDRCVARGQWPDVRGSQHGHTGRQVSSPYSQGESTCETQTKLKKFQTGTRTKKSSKKKMNETIFCLVSIPVKSESHLPDRDMDNNDLKPSADQKNGSDKSPALQEQSLLSMSSTDLELQALTGSMGGRTEFQKQDLGEPEEDRQTNDLSFIHLTKHRELKHSGSWPGHRYRDQQTQTSFSEEPQSSQLLPGAKLGGPSRAALSPKCSDPAASEAQTHTAFPTGDHKQRPSARNLKGHRSLSPSSNSAFSRTSLSVDQAPTPKAGRSQPCVDVHGLGAHPGPKREVVKGEPTGPCNSKQLFGQFLLKPVSRRPWDLISQLESFNKELQEEEESSSSSSSSSSSSEESEAEPQQENRAHCRQEDVGFRGNSPEMRVEPQPRMWVPESPVCRSGRGESKSESWSEELQPGHPRAWPPSPGRFRVEEGGGAPFCSADGSTSAEKRHLEVSNGMDELAGSPFPVTRMSSRSSDAKPLPASYPAEPREPQESPKITSAFSSVKPSEAVPRKFDSGGERGAGLPLSLSNKNRGLSAPDLRSVGLTPGQEQGASELEGSLGEASTIEIPPGESLQARAARILGIEVAVESLLPGIRRAGQNQPAEPDASACTPESPQEELLSRPAPADVPRVSTDAFYGRRKCGWTKSPLFVGDRDSARRAPQAFEHSDVDGVVTSTDPVPEPEPSPLESKFFEQKDVETKPPFRSTLFHFVERTPSVAGSEKRLRSPSKVIESLQEKLASPPRRADPDRLMRMKEVSSVSRMRVLSFRNADSQEDAEELKATTRGQAGLPGGLVSPGSGDRAQRLGHSLSVSKDSISREEKEHPAAQKEKSMDQDFWCPDSYDPSRVERV.

Disordered regions lie at residues 1–147, 249–411, 454–554, 591–813, 840–1076, 1105–1141, 1157–1207, 1225–1260, and 1276–1359; these read MYSV…SLPV, PLNE…PAHP, NSSP…TCET, SHLP…CNSK, KELQ…TIEI, RAGQ…PRVS, PLFV…KDVE, SVAG…DRLM, and FRNA…VERV. A compositionally biased stretch (basic and acidic residues) spans 15 to 28; that stretch reads LSRDPPASREDNPK. 2 stretches are compositionally biased toward polar residues: residues 82 to 91 and 98 to 112; these read PQSTSASRTS and QPPS…TGND. A compositionally biased stretch (basic and acidic residues) spans 120 to 135; it reads RQEARSQKPREHENLE. Positions 302–321 are enriched in low complexity; the sequence is QQSRGGADSSDSQDSQQMDA. The span at 335–353 shows a compositional bias: pro residues; the sequence is LEPPVYVPPPSYRSPPQNI. Residues 539 to 554 are compositionally biased toward polar residues; that stretch reads RQVSSPYSQGESTCET. Residues 591–613 are compositionally biased toward basic and acidic residues; the sequence is SHLPDRDMDNNDLKPSADQKNGS. Polar residues-rich tracts occupy residues 619 to 632, 689 to 704, and 756 to 773; these read LQEQ…STDL, QQTQ…SSQL, and LSPS…SVDQ. The segment covering 849–859 has biased composition (low complexity); sequence SSSSSSSSSSS. Over residues 868–880 the composition is skewed to basic and acidic residues; that stretch reads QENRAHCRQEDVG. Polar residues predominate over residues 1003 to 1013; the sequence is PKITSAFSSVK. Serine 1044 and serine 1050 each carry phosphoserine. Serine 1194 bears the Phosphoserine mark. The residue at position 1281 (serine 1281) is a Phosphoserine. Over residues 1324–1342 the composition is skewed to basic and acidic residues; that stretch reads SISREEKEHPAAQKEKSMD.

Its subcellular location is the cell junction. The protein resides in the adherens junction. The sequence is that of Junctional cadherin 5-associated protein from Homo sapiens (Human).